Here is a 301-residue protein sequence, read N- to C-terminus: Ribonuclease Z (301 aa).

H63, H65, D67, H68, H141, D204, and H262 together coordinate Zn(2+). D67 serves as the catalytic Proton acceptor.

It belongs to the RNase Z family. In terms of assembly, homodimer. Zn(2+) serves as cofactor.

It carries out the reaction Endonucleolytic cleavage of RNA, removing extra 3' nucleotides from tRNA precursor, generating 3' termini of tRNAs. A 3'-hydroxy group is left at the tRNA terminus and a 5'-phosphoryl group is left at the trailer molecule.. Its function is as follows. Zinc phosphodiesterase, which displays some tRNA 3'-processing endonuclease activity. Probably involved in tRNA maturation, by removing a 3'-trailer from precursor tRNA. The protein is Ribonuclease Z of Streptomyces avermitilis (strain ATCC 31267 / DSM 46492 / JCM 5070 / NBRC 14893 / NCIMB 12804 / NRRL 8165 / MA-4680).